We begin with the raw amino-acid sequence, 112 residues long: Small ribosomal subunit protein bS6c (112 aa).

It belongs to the bacterial ribosomal protein bS6 family.

Its subcellular location is the plastid. It is found in the chloroplast. Its function is as follows. Binds together with bS18 to 16S ribosomal RNA. The protein is Small ribosomal subunit protein bS6c (rps6) of Porphyra purpurea (Red seaweed).